A 219-amino-acid polypeptide reads, in one-letter code: Proteasome subunit beta type-9 (219 aa).

Residues 1-20 (MLQAGAPTAGSFRTGEVHTG) constitute a propeptide, removed in mature form. The Nucleophile role is filled by Thr21. N6-acetyllysine is present on residues Lys53 and Lys109.

Belongs to the peptidase T1B family. The 26S proteasome consists of a 20S proteasome core and two 19S regulatory subunits. The 20S proteasome core is composed of 28 subunits that are arranged in four stacked rings, resulting in a barrel-shaped structure. The two end rings are each formed by seven alpha subunits, and the two central rings are each formed by seven beta subunits. The catalytic chamber with the active sites is on the inside of the barrel. Component of the immunoproteasome, where it displaces the equivalent housekeeping subunit PSMB6. Component of the spermatoproteasome, a form of the proteasome specifically found in testis. Interacts with NCOA2 and NCOA3. In terms of processing, autocleaved. The resulting N-terminal Thr residue of the mature subunit is responsible for the nucleophile proteolytic activity. As to expression, detected in the cytoplasmic lobe of elongated spermatids, in residual bodies, and in the acrosomal cap of round spermatids.

It localises to the cytoplasm. Its subcellular location is the nucleus. It carries out the reaction Cleavage of peptide bonds with very broad specificity.. Its function is as follows. The proteasome is a multicatalytic proteinase complex which is characterized by its ability to cleave peptides with Arg, Phe, Tyr, Leu, and Glu adjacent to the leaving group at neutral or slightly basic pH. The proteasome has an ATP-dependent proteolytic activity. This subunit is involved in antigen processing to generate class I binding peptides. This chain is Proteasome subunit beta type-9 (Psmb9), found in Rattus norvegicus (Rat).